The chain runs to 201 residues: Large ribosomal subunit protein bL9 (201 aa).

Over residues 150 to 165 (EAERQAAGEDLTQRRD) the composition is skewed to basic and acidic residues. Positions 150–201 (EAERQAAGEDLTQRRDDEEEEAVEAAEFFESEELAPGDEEEEAAGEEEDAKE) are disordered. The segment covering 166–201 (DEEEEAVEAAEFFESEELAPGDEEEEAAGEEEDAKE) has biased composition (acidic residues).

The protein belongs to the bacterial ribosomal protein bL9 family.

Functionally, binds to the 23S rRNA. The sequence is that of Large ribosomal subunit protein bL9 from Parvibaculum lavamentivorans (strain DS-1 / DSM 13023 / NCIMB 13966).